The following is an 80-amino-acid chain: Three-finger toxin MALT0059C (80 aa).

Positions 1–21 (MRTLLLTLVVVTIVCLDLGNS) are cleaved as a signal peptide. Cystine bridges form between Cys-24–Cys-41, Cys-35–Cys-60, Cys-64–Cys-72, and Cys-73–Cys-78.

It belongs to the three-finger toxin family. Short-chain subfamily. Expressed by the venom gland.

It is found in the secreted. In terms of biological role, neurotoxin. Blocks muscular nicotinic acetylcholine receptors (nAChR). The sequence is that of Three-finger toxin MALT0059C from Micrurus altirostris (Uruguayan coral snake).